The chain runs to 63 residues: Prokaryotic ubiquitin-like protein Pup (63 aa).

Positions 1–28 are disordered; sequence MSDRQTQIPAGGGREDDHDDQVQSAGQV. The interval 19–57 is ARC ATPase binding; the sequence is DDQVQSAGQVQVNTEGVDDLLDEIDGLLENNAEEFVRSY. Residue Glu-63 forms an Isoglutamyl lysine isopeptide (Glu-Lys) (interchain with K-? in acceptor proteins) linkage.

This sequence belongs to the prokaryotic ubiquitin-like protein family. Strongly interacts with the proteasome-associated ATPase ARC through a hydrophobic interface; the interacting region of Pup lies in its C-terminal half. There is one Pup binding site per ARC hexamer ring.

It participates in protein degradation; proteasomal Pup-dependent pathway. Protein modifier that is covalently attached to lysine residues of substrate proteins, thereby targeting them for proteasomal degradation. The tagging system is termed pupylation. The protein is Prokaryotic ubiquitin-like protein Pup of Corynebacterium efficiens (strain DSM 44549 / YS-314 / AJ 12310 / JCM 11189 / NBRC 100395).